The following is a 221-amino-acid chain: Potassium voltage-gated channel subfamily E member 4 (221 aa).

Residues 1–86 lie on the Extracellular side of the membrane; it reads MHFLTIYPNC…AGGGSGNGNE (86 aa). Asparagine 9 is a glycosylation site (N-linked (GlcNAc...) asparagine). Residues 58–72 show a composition bias toward polar residues; sequence LNSTHPGTAASSSPL. Residues 58-77 are disordered; that stretch reads LNSTHPGTAASSSPLESRAA. Residues 87 to 107 traverse the membrane as a helical segment; the sequence is YFYILVVMSFYGIFLIGIMLG. Residues 108–221 lie on the Cytoplasmic side of the membrane; that stretch reads YMKSKRREKK…GSSENIHQNS (114 aa). Positions 175–221 are disordered; the sequence is SVSSESSSPDVHLTIQEEGADDELEETSETPLNESSEGSSENIHQNS. A compositionally biased stretch (acidic residues) spans 192–202; it reads EGADDELEETS. The segment covering 203 to 221 has biased composition (polar residues); sequence ETPLNESSEGSSENIHQNS.

It belongs to the potassium channel KCNE family. Forms heterooligomers with KCNA3, inhibiting its activity by impairing localization to the cell membrane. The stoichiometry of KCNA3 and KCNE4 in the heterooligomers are 4:1, 4:2, 4:3 or 4:4 respectively. Increasing the number of KCNE4 subunits steadily slows the activation KCNA3 and decreases its abundance at the cell membrane. However, a single subunit of KCNE4 is sufficient for the cooperative enhancement of the inactivating function of the channel. However, a single subunit of KCNE4 is sufficient for the cooperative enhancement of the inactivating function of the channel. Interacts with KCNQ1; impairs KCNQ1 localization in lipid rafts and inhibits voltage-gated potassium channel activity. As to expression, predominantly expressed in embryo and adult uterus. Low expression found in kidney, small intestine, lung and heart. In terms of tissue distribution, detected in kidney, thymus, and uterus (at protein level).

It is found in the membrane. In terms of biological role, ancillary protein that functions as a regulatory subunit of the voltage-gated potassium (Kv) channel complex composed of pore-forming and potassium-conducting alpha subunits and of regulatory beta subunits. KCNE4 beta subunit modulates the gating kinetics and enhances stability of the channel complex. Associates with KCNQ1/KVLTQ1 alpha subunit to inhibit potassium currents. Its function is as follows. May inhibit KCNQ4-mediated potassium currents. This is Potassium voltage-gated channel subfamily E member 4 from Homo sapiens (Human).